The following is a 418-amino-acid chain: Putative competence-damage inducible protein (418 aa).

The protein belongs to the CinA family.

The polypeptide is Putative competence-damage inducible protein (Streptococcus pneumoniae serotype 2 (strain D39 / NCTC 7466)).